We begin with the raw amino-acid sequence, 207 residues long: ATP synthase subunit b 2 (207 aa).

Over residues methionine 1–glycine 31 the composition is skewed to low complexity. A disordered region spans residues methionine 1–serine 41. The helical transmembrane segment at alanine 48–serine 70 threads the bilayer.

The protein belongs to the ATPase B chain family. In terms of assembly, F-type ATPases have 2 components, F(1) - the catalytic core - and F(0) - the membrane proton channel. F(1) has five subunits: alpha(3), beta(3), gamma(1), delta(1), epsilon(1). F(0) has three main subunits: a(1), b(2) and c(10-14). The alpha and beta chains form an alternating ring which encloses part of the gamma chain. F(1) is attached to F(0) by a central stalk formed by the gamma and epsilon chains, while a peripheral stalk is formed by the delta and b chains.

The protein resides in the cell inner membrane. F(1)F(0) ATP synthase produces ATP from ADP in the presence of a proton or sodium gradient. F-type ATPases consist of two structural domains, F(1) containing the extramembraneous catalytic core and F(0) containing the membrane proton channel, linked together by a central stalk and a peripheral stalk. During catalysis, ATP synthesis in the catalytic domain of F(1) is coupled via a rotary mechanism of the central stalk subunits to proton translocation. In terms of biological role, component of the F(0) channel, it forms part of the peripheral stalk, linking F(1) to F(0). The chain is ATP synthase subunit b 2 from Xanthobacter autotrophicus (strain ATCC BAA-1158 / Py2).